The primary structure comprises 228 residues: Ribose-5-phosphate isomerase A (228 aa).

Substrate is bound by residues 32 to 35 (TGST), 85 to 88 (DGAD), and 98 to 101 (KGGG). Glutamate 107 acts as the Proton acceptor in catalysis. A substrate-binding site is contributed by lysine 125.

This sequence belongs to the ribose 5-phosphate isomerase family. Homodimer.

It carries out the reaction aldehydo-D-ribose 5-phosphate = D-ribulose 5-phosphate. Its pathway is carbohydrate degradation; pentose phosphate pathway; D-ribose 5-phosphate from D-ribulose 5-phosphate (non-oxidative stage): step 1/1. Catalyzes the reversible conversion of ribose-5-phosphate to ribulose 5-phosphate. The polypeptide is Ribose-5-phosphate isomerase A (Cupriavidus taiwanensis (strain DSM 17343 / BCRC 17206 / CCUG 44338 / CIP 107171 / LMG 19424 / R1) (Ralstonia taiwanensis (strain LMG 19424))).